A 95-amino-acid polypeptide reads, in one-letter code: Large ribosomal subunit protein bL25 (95 aa).

The protein belongs to the bacterial ribosomal protein bL25 family. As to quaternary structure, part of the 50S ribosomal subunit; part of the 5S rRNA/L5/L18/L25 subcomplex. Contacts the 5S rRNA. Binds to the 5S rRNA independently of L5 and L18.

Its function is as follows. This is one of the proteins that binds to the 5S RNA in the ribosome where it forms part of the central protuberance. This Shewanella oneidensis (strain ATCC 700550 / JCM 31522 / CIP 106686 / LMG 19005 / NCIMB 14063 / MR-1) protein is Large ribosomal subunit protein bL25.